Reading from the N-terminus, the 1024-residue chain is Seizure 6-like protein (1024 aa).

An N-terminal signal peptide occupies residues 1–28; sequence MPAARPPAAGLRGISLFLALLLGSPAAA. Residues 29 to 958 lie on the Extracellular side of the membrane; it reads LERDALPEGD…ETSLEGGNMA (930 aa). Disordered stretches follow at residues 33–77, 108–184, and 212–234; these read ALPE…SQSA, RPKH…EVPL, and AHTL…EAPQ. Ser-49 carries an O-linked (GalNAc...) serine glycan. Residues 56–66 are compositionally biased toward basic and acidic residues; that stretch reads SPGKEHPEERV. Residues 110-120 are compositionally biased toward basic residues; it reads KHALPPKKKLP. Over residues 138–162 the composition is skewed to polar residues; sequence SAATVQRAGSQPASQGLDLLSSSTE. O-glycosylated at one site regions lie at residues 147-161 and 176-180; these read SQPA…SSST and SEEAS. Cys-281 and Cys-308 are disulfide-bonded. In terms of domain architecture, CUB 1 spans 281–389; that stretch reads CSVSFSNPEG…GTFQLHYQAF (109 aa). N-linked (GlcNAc...) asparagine glycosylation is found at Asn-311, Asn-328, and Asn-350. Residues 391–450 form the Sushi 1 domain; that stretch reads LSCNFPRRPDSGDVTVMDLHSGGVAHFHCHLGYELQGAKMLTCINASKPHWSSQEPICSA. 2 disulfides stabilise this stretch: Cys-393/Cys-433 and Cys-419/Cys-448. Asn-435, Asn-458, Asn-474, Asn-514, Asn-576, Asn-618, Asn-674, and Asn-742 each carry an N-linked (GlcNAc...) asparagine glycan. The CUB 2 domain occupies 452–562; the sequence is CGGAVHNATI…STFNIRFEAF (111 aa). A Sushi 2 domain is found at 565–626; that stretch reads GHCYEPYIQN…WNDTEPLCRA (62 aa). 2 cysteine pairs are disulfide-bonded: Cys-567–Cys-609 and Cys-594–Cys-624. The region spanning 628 to 739 is the CUB 3 domain; that stretch reads CGGELSAVAG…QGFIMNYIEV (112 aa). 3 consecutive Sushi domains span residues 743 to 802, 804 to 867, and 871 to 932; these read DSCS…FCEK, MYCT…HCVS, and LACD…VCKV. 6 cysteine pairs are disulfide-bonded: Cys-745/Cys-787, Cys-773/Cys-800, Cys-806/Cys-848, Cys-834/Cys-865, Cys-873/Cys-915, and Cys-901/Cys-930. A helical transmembrane segment spans residues 959–979; the sequence is LAIFIPVLIISLLLGGAYIYI. Topologically, residues 980–1024 are cytoplasmic; it reads TRCRYYSNLRLPLMYSHPYSQITVETEFDNPIYETGETREYEVSI.

This sequence belongs to the SEZ6 family. O-glycosylated. In terms of tissue distribution, widely expressed, including adult and fetal brains and lungs. Not expressed in all lung cancer cell lines.

The protein resides in the endoplasmic reticulum membrane. In terms of biological role, may contribute to specialized endoplasmic reticulum functions in neurons. In Homo sapiens (Human), this protein is Seizure 6-like protein (SEZ6L).